The chain runs to 114 residues: Flagellar hook-basal body complex protein FliE (114 aa).

It belongs to the FliE family.

It is found in the bacterial flagellum basal body. The polypeptide is Flagellar hook-basal body complex protein FliE (Desulfitobacterium hafniense (strain Y51)).